The sequence spans 263 residues: Ribonuclease HII (263 aa).

In terms of domain architecture, RNase H type-2 spans 74 to 262; that stretch reads EHVAGLDEVG…VQETAATRQT (189 aa). Residues D80, E81, and D172 each coordinate a divalent metal cation.

Belongs to the RNase HII family. Mn(2+) is required as a cofactor. The cofactor is Mg(2+).

It is found in the cytoplasm. It carries out the reaction Endonucleolytic cleavage to 5'-phosphomonoester.. Endonuclease that specifically degrades the RNA of RNA-DNA hybrids. This Halalkalibacterium halodurans (strain ATCC BAA-125 / DSM 18197 / FERM 7344 / JCM 9153 / C-125) (Bacillus halodurans) protein is Ribonuclease HII (rnhB).